The sequence spans 138 residues: Secreted RxLR effector protein 51 (138 aa).

Positions 1–19 (MRSSTILFVLGVAMVAVNG) are cleaved as a signal peptide. The RxLR-dEER motif lies at 38 to 53 (RLLRSNSGKHKTDEER). N101 carries an N-linked (GlcNAc...) asparagine glycan.

It belongs to the RxLR effector family.

Its subcellular location is the secreted. The protein localises to the host nucleus. Its function is as follows. Secreted effector that completely suppresses the host cell death induced by cell death-inducing proteins. This is Secreted RxLR effector protein 51 from Plasmopara viticola (Downy mildew of grapevine).